We begin with the raw amino-acid sequence, 273 residues long: Type IV secretion system protein PtlF (273 aa).

The first 20 residues, 1-20 (MMAARMMAAGLAATALSAHA), serve as a signal peptide directing secretion.

This sequence belongs to the TrbG/VirB9 family. As to quaternary structure, forms a complex with PtlI.

It is found in the cell outer membrane. In terms of biological role, component of the type IV secretion system ptl required for secretion of assembled pertussis toxin (PTX) through the outer membrane. The sequence is that of Type IV secretion system protein PtlF (ptlF) from Bordetella pertussis (strain Tohama I / ATCC BAA-589 / NCTC 13251).